Reading from the N-terminus, the 717-residue chain is MVMRPISNKGLIYRHNICLRCNSTLAVSNHEPITQKTRNFLETTTTSTAIFQCNSQISKHARNGNLQEAEAIFRQMSNRSIVSWIAMISAYAENGKMSKAWQVFDEMPVRVTTSYNAMITAMIKNKCDLGKAYELFCDIPEKNAVSYATMITGFVRAGRFDEAEFLYAETPVKFRDSVASNVLLSGYLRAGKWNEAVRVFQGMAVKEVVSCSSMVHGYCKMGRIVDARSLFDRMTERNVITWTAMIDGYFKAGFFEDGFGLFLRMRQEGDVKVNSNTLAVMFKACRDFVRYREGSQIHGLVSRMPLEFDLFLGNSLMSMYSKLGYMGEAKAVFGVMKNKDSVSWNSLITGLVQRKQISEAYELFEKMPGKDMVSWTDMIKGFSGKGEISKCVELFGMMPEKDNITWTAMISAFVSNGYYEEALCWFHKMLQKEVCPNSYTFSSVLSATASLADLIEGLQIHGRVVKMNIVNDLSVQNSLVSMYCKCGNTNDAYKIFSCISEPNIVSYNTMISGYSYNGFGKKALKLFSMLESSGKEPNGVTFLALLSACVHVGYVDLGWKYFKSMKSSYNIEPGPDHYACMVDLLGRSGLLDDASNLISTMPCKPHSGVWGSLLSASKTHLRVDLAELAAKKLIELEPDSATPYVVLSQLYSIIGKNRDCDRIMNIKKSKRIKKDPGSSWIILKGEVHNFLAGDESQLNLEEIGFTLKMIRKEMELI.

Residues 1-47 (MVMRPISNKGLIYRHNICLRCNSTLAVSNHEPITQKTRNFLETTTTS) constitute a mitochondrion transit peptide. 17 PPR repeats span residues 49 to 79 (AIFQ…MSNR), 80 to 110 (SIVS…MPVR), 111 to 142 (VTTS…IPEK), 143 to 173 (NAVS…TPVK), 176 to 206 (DSVA…MAVK), 207 to 241 (EVVS…NVIT), 242 to 272 (WTAM…GDVK), 274 to 308 (NSNT…PLEF), 309 to 339 (DLFL…MKNK), 340 to 374 (DSVS…DMVS), 375 to 401 (WTDM…MPEK), 402 to 436 (DNIT…EVCP), 437 to 471 (NSYT…NIVN), 472 to 502 (DLSV…ISEP), 503 to 537 (NIVS…GKEP), 538 to 568 (NGVT…MKSS), and 574 to 604 (GPDH…MPCK). Residues 609–684 (VWGSLLSASK…DPGSSWIILK (76 aa)) form a type E motif region. The type E(+) motif stretch occupies residues 685 to 715 (GEVHNFLAGDESQLNLEEIGFTLKMIRKEME).

This sequence belongs to the PPR family. PCMP-E subfamily.

The protein resides in the mitochondrion. This chain is Pentatricopeptide repeat-containing protein At1g53600, mitochondrial (PCMP-E63), found in Arabidopsis thaliana (Mouse-ear cress).